A 99-amino-acid chain; its full sequence is YcgL domain-containing protein HD_1373 (99 aa).

In terms of domain architecture, YcgL spans 8 to 92 (NFCAIYKSMS…PAENLLKQFL (85 aa)).

The protein is YcgL domain-containing protein HD_1373 of Haemophilus ducreyi (strain 35000HP / ATCC 700724).